A 1211-amino-acid chain; its full sequence is DNA-directed RNA polymerase subunit beta' (1211 aa).

The Zn(2+) site is built by cysteine 60, cysteine 62, cysteine 75, and cysteine 78. Residues aspartate 450, aspartate 452, and aspartate 454 each contribute to the Mg(2+) site. Zn(2+) contacts are provided by cysteine 819, cysteine 893, cysteine 900, and cysteine 903.

The protein belongs to the RNA polymerase beta' chain family. The RNAP catalytic core consists of 2 alpha, 1 beta, 1 beta' and 1 omega subunit. When a sigma factor is associated with the core the holoenzyme is formed, which can initiate transcription. Mg(2+) serves as cofactor. Requires Zn(2+) as cofactor.

It carries out the reaction RNA(n) + a ribonucleoside 5'-triphosphate = RNA(n+1) + diphosphate. Its function is as follows. DNA-dependent RNA polymerase catalyzes the transcription of DNA into RNA using the four ribonucleoside triphosphates as substrates. The chain is DNA-directed RNA polymerase subunit beta' from Streptococcus equi subsp. zooepidemicus (strain H70).